The following is a 113-amino-acid chain: Thioredoxin H-type (113 aa).

The region spanning 2–112 (GGSVIVIDSK…LKALVAKHAA (111 aa)) is the Thioredoxin domain. Residues Cys37 and Cys40 each act as nucleophile in the active site. Cys37 and Cys40 are oxidised to a cystine.

It belongs to the thioredoxin family. Plant H-type subfamily.

It localises to the cytoplasm. In terms of biological role, participates in various redox reactions through the reversible oxidation of the active center dithiol to a disulfide. The H form is known to activate a number of cytosolic enzymes. The chain is Thioredoxin H-type (TRXH) from Chlamydomonas reinhardtii (Chlamydomonas smithii).